The sequence spans 344 residues: Glycerol-3-phosphate dehydrogenase [NAD(P)+] (344 aa).

Residues Trp11, Arg31, Arg32, and Lys105 each coordinate NADPH. Sn-glycerol 3-phosphate contacts are provided by Lys105, Gly133, and Ser135. NADPH is bound at residue Ala137. 5 residues coordinate sn-glycerol 3-phosphate: Lys188, Asp241, Ser251, Arg252, and Asn253. Residue Lys188 is the Proton acceptor of the active site. Arg252 is a binding site for NADPH. Glu278 provides a ligand contact to NADPH.

This sequence belongs to the NAD-dependent glycerol-3-phosphate dehydrogenase family.

The protein localises to the cytoplasm. The catalysed reaction is sn-glycerol 3-phosphate + NAD(+) = dihydroxyacetone phosphate + NADH + H(+). It carries out the reaction sn-glycerol 3-phosphate + NADP(+) = dihydroxyacetone phosphate + NADPH + H(+). The protein operates within membrane lipid metabolism; glycerophospholipid metabolism. Functionally, catalyzes the reduction of the glycolytic intermediate dihydroxyacetone phosphate (DHAP) to sn-glycerol 3-phosphate (G3P), the key precursor for phospholipid synthesis. In Acidithiobacillus ferrooxidans (strain ATCC 23270 / DSM 14882 / CIP 104768 / NCIMB 8455) (Ferrobacillus ferrooxidans (strain ATCC 23270)), this protein is Glycerol-3-phosphate dehydrogenase [NAD(P)+].